A 185-amino-acid chain; its full sequence is Probable gluconokinase (185 aa).

Residue 11-18 participates in ATP binding; it reads GVSGSGKS.

This sequence belongs to the gluconokinase GntK/GntV family.

It catalyses the reaction D-gluconate + ATP = 6-phospho-D-gluconate + ADP + H(+). It participates in carbohydrate acid metabolism; D-gluconate degradation. In Rattus norvegicus (Rat), this protein is Probable gluconokinase (Idnk).